A 636-amino-acid chain; its full sequence is Chaperone protein DnaK (636 aa).

Thr203 carries the phosphothreonine; by autocatalysis modification. The disordered stretch occupies residues 602-636; sequence VYGKQQEGAPAQEEPSAEGKKADDEGTVEGEFREV. The span at 618-636 shows a compositional bias: basic and acidic residues; the sequence is AEGKKADDEGTVEGEFREV.

It belongs to the heat shock protein 70 family.

In terms of biological role, acts as a chaperone. The protein is Chaperone protein DnaK of Dehalococcoides mccartyi (strain ATCC BAA-2100 / JCM 16839 / KCTC 5957 / BAV1).